Here is a 1050-residue protein sequence, read N- to C-terminus: Beta-galactosidase (1050 aa).

N100 and D199 together coordinate substrate. D199 serves as a coordination point for Na(+). E422, H424, and E467 together coordinate Mg(2+). Substrate contacts are provided by residues E467 and 543-546 (EYAH). The active-site Proton donor is E467. E543 acts as the Nucleophile in catalysis. N603 contacts Mg(2+). Na(+)-binding residues include F607 and N610. Residues N610 and W1025 each contribute to the substrate site.

The protein belongs to the glycosyl hydrolase 2 family. As to quaternary structure, homotetramer. Requires Mg(2+) as cofactor. Na(+) is required as a cofactor.

It carries out the reaction Hydrolysis of terminal non-reducing beta-D-galactose residues in beta-D-galactosides.. In Yersinia pestis bv. Antiqua (strain Angola), this protein is Beta-galactosidase.